Reading from the N-terminus, the 546-residue chain is Probable protein kinase UbiB (546 aa).

Positions 123–501 (DFDETPLASA…SRRQGQARYL (379 aa)) constitute a Protein kinase domain. Residues 129 to 137 (LASASIAQV) and Lys152 contribute to the ATP site. Asp287 serves as the catalytic Proton acceptor. 2 helical membrane-spanning segments follow: residues 496 to 516 (GQAR…VFLL) and 521 to 541 (HIEW…LGWF).

The protein belongs to the ABC1 family. UbiB subfamily.

It is found in the cell inner membrane. It participates in cofactor biosynthesis; ubiquinone biosynthesis [regulation]. Functionally, is probably a protein kinase regulator of UbiI activity which is involved in aerobic coenzyme Q (ubiquinone) biosynthesis. The polypeptide is Probable protein kinase UbiB (Aeromonas salmonicida (strain A449)).